Reading from the N-terminus, the 250-residue chain is MPGSIPLIGERFPEMEVTTDHGVIKLPDHYVSQGKWFVLFSHPADFTPVCTTEFVSFARRYEDFQRLGVDLIGLSVDSVFSHIKWKEWIERHIGVRIPFPIIADPQGTVARRLGLLHAESATHTVRGVFIVDARGVIRTMLYYPMELGRLVDEILRIVKALKLGDSLKRAVPADWPNNEIIGEGLIVPPPTTEDQARARMESGQYRCLDWWFCWDTPASRDDVEEARRYLRRAAEKPAKLLYEEARTHLH.

Residues 6-163 (PLIGERFPEM…ILRIVKALKL (158 aa)) form the Thioredoxin domain. The active-site Cysteine sulfenic acid (-SOH) intermediate is the cysteine 50. Arginine 126 is a substrate binding site. A disulfide bridge links cysteine 207 with cysteine 213.

This sequence belongs to the peroxiredoxin family. Prx6 subfamily. In terms of assembly, homodecamer. Pentamer of dimers that assemble into a ring structure.

It localises to the cytoplasm. It catalyses the reaction a hydroperoxide + [thioredoxin]-dithiol = an alcohol + [thioredoxin]-disulfide + H2O. Its function is as follows. Thiol-specific peroxidase that catalyzes the reduction of hydrogen peroxide and organic hydroperoxides to water and alcohols, respectively. Plays a role in cell protection against oxidative stress by detoxifying peroxides. This is Peroxiredoxin from Aeropyrum pernix (strain ATCC 700893 / DSM 11879 / JCM 9820 / NBRC 100138 / K1).